The chain runs to 96 residues: Molybdopterin synthase sulfur carrier subunit (96 aa).

Residue G96 is modified to 1-thioglycine; alternate. G96 carries the glycyl adenylate; alternate modification.

The protein belongs to the MoaD family. MOCS2A subfamily. As to quaternary structure, heterotetramer; composed of 2 small (MOCS2A) and 2 large (MOCS2B) subunits. In terms of processing, C-terminal thiocarboxylation occurs in 2 steps, it is first acyl-adenylated (-COAMP) via the hesA/moeB/thiF part of UBA4, then thiocarboxylated (-COSH) via the rhodanese domain of UBA4.

Its subcellular location is the cytoplasm. The protein operates within cofactor biosynthesis; molybdopterin biosynthesis. Its function is as follows. Acts as a sulfur carrier required for molybdopterin biosynthesis. Component of the molybdopterin synthase complex that catalyzes the conversion of precursor Z into molybdopterin by mediating the incorporation of 2 sulfur atoms into precursor Z to generate a dithiolene group. In the complex, serves as sulfur donor by being thiocarboxylated (-COSH) at its C-terminus by UBA4. After interaction with MOCS2B, the sulfur is then transferred to precursor Z to form molybdopterin. The chain is Molybdopterin synthase sulfur carrier subunit from Phaeosphaeria nodorum (strain SN15 / ATCC MYA-4574 / FGSC 10173) (Glume blotch fungus).